The chain runs to 699 residues: Bifunctional protein GAL10 (699 aa).

Residues Met-1 to Leu-357 form a galactowaldenase region. Position 13–44 (Ile-13–Leu-44) interacts with NAD(+). The interval Arg-358–Ser-699 is mutarotase. The For mutarotase activity role is filled by His-537. A Phosphoserine modification is found at Ser-562.

It in the N-terminal section; belongs to the NAD(P)-dependent epimerase/dehydratase family. The protein in the C-terminal section; belongs to the aldose epimerase family. Requires NAD(+) as cofactor.

The catalysed reaction is UDP-alpha-D-glucose = UDP-alpha-D-galactose. It catalyses the reaction alpha-D-glucose = beta-D-glucose. Its pathway is carbohydrate metabolism; galactose metabolism. It participates in carbohydrate metabolism; hexose metabolism. In terms of biological role, mutarotase converts alpha-aldose to the beta-anomer. It is active on D-glucose, L-arabinose, D-xylose, D-galactose, maltose and lactose. The polypeptide is Bifunctional protein GAL10 (GAL10) (Saccharomyces cerevisiae (strain ATCC 204508 / S288c) (Baker's yeast)).